The sequence spans 544 residues: Intercellular adhesion molecule 3 (544 aa).

An N-terminal signal peptide occupies residues 1-31; it reads MIASGPPPRVYWTSLIFLLLACCLLPTGAQG. The Extracellular portion of the chain corresponds to 32–486; the sequence is QTYQVRVEPK…MMDVQGRNPV (455 aa). Positions 48–105 constitute an Ig-like C2-type 1 domain; that stretch reads GEPLVVNCTLDCPGPGLISLETALSKEPHSRGLGWAAFRLTNVTGDMEILCSGICNKS. N-linked (GlcNAc...) asparagine glycosylation is found at N54, N89, N103, N112, N138, N190, N209, N243, N267, N296, N321, and N326. 2 disulfides stabilise this stretch: C55–C98 and C59–C102. The 67-residue stretch at 134-200 folds into the Ig-like C2-type 2 domain; sequence GEELNLSCLV…FSCRSELDLR (67 aa). C141 and C193 form a disulfide bridge. Residues 237–302 enclose the Ig-like C2-type 3 domain; it reads ETSWPVNCSL…IVCNVTLGVE (66 aa). C244 and C295 are joined by a disulfide. Residues 330-383 enclose the Ig-like C2-type 4 domain; the sequence is GTPVTVTCAAGPQVQVMLDGVPAAVPGQPAQLQLKATEMDDRRTFFCNATLKVH. Residues C337 and C376 are joined by a disulfide bond. N-linked (GlcNAc...) asparagine glycans are attached at residues N377, N390, and N456. In terms of domain architecture, Ig-like C2-type 5 spans 417 to 470; sequence KTMHILQCQARGNPNPQLQCLREGSKFKVPVGIPFLVLLNYSGTYSCQAASSRG. C424 and C463 form a disulfide bridge. Residues 487 to 511 traverse the membrane as a helical segment; the sequence is TINIVLGVLAILGLVTLAAASVYVF. The Cytoplasmic segment spans residues 512-544; it reads WVQRQHDIYHLTPRSTRWRLTSTQPVTVAEELS.

The protein belongs to the immunoglobulin superfamily. ICAM family. Interacts with moesin/MSN. Leukocytes.

The protein localises to the membrane. Its function is as follows. ICAM proteins are ligands for the leukocyte adhesion protein LFA-1 (integrin alpha-L/beta-2). ICAM3 is also a ligand for integrin alpha-D/beta-2. In association with integrin alpha-L/beta-2, contributes to apoptotic neutrophil phagocytosis by macrophages. The protein is Intercellular adhesion molecule 3 (ICAM3) of Bos taurus (Bovine).